The sequence spans 248 residues: Large ribosomal subunit protein uL29m (248 aa).

2 disordered regions span residues 77–107 and 223–248; these read VSKYPLPRPVKPKEQEKRPSNPKHGLWGFFG and AYEPPALDVEEPKGEASDSVKTPPSS.

This sequence belongs to the universal ribosomal protein uL29 family. As to quaternary structure, component of the mitochondrial large ribosomal subunit. Mature mitochondrial ribosomes consist of a small (37S) and a large (54S) subunit. The 37S subunit contains at least 33 different proteins and 1 molecule of RNA (15S). The 54S subunit contains at least 45 different proteins and 1 molecule of RNA (21S).

The protein localises to the mitochondrion. The sequence is that of Large ribosomal subunit protein uL29m (MRPL4) from Ajellomyces capsulatus (strain NAm1 / WU24) (Darling's disease fungus).